Reading from the N-terminus, the 142-residue chain is Small ribosomal subunit protein uS12 (142 aa).

It belongs to the universal ribosomal protein uS12 family. As to quaternary structure, part of the 30S ribosomal subunit.

Functionally, with S4 and S5 plays an important role in translational accuracy. Located at the interface of the 30S and 50S subunits. This chain is Small ribosomal subunit protein uS12, found in Methanococcoides burtonii (strain DSM 6242 / NBRC 107633 / OCM 468 / ACE-M).